A 512-amino-acid chain; its full sequence is MSQDQPIVLDPTYASFDAAARPADLGATHFIGIGGAGMSVLAEMLHAEGVSVDGSDRSHSAKTDRLETLGITVEFGQRAENVAQAETVVYSSAIKPDNPEIVAAHAAGKRIVHRSDILALLMNGKRAVTVAGAHGKTTTSSMLSHILVNAGADPSYAIGGFIQGPDGTTLDGGHAGKGDILVAEADESDGSFAKYHPTIAIITNCEADHLDHYGDEAHYRAAFVAHAGRATGHVIISIDDPDGLAVLEAMPADVKSHTVAYGTTARESLPDLGGAAYVWIASESETAGSGVEQLTLHLPAAVTAGEPVSQSVALKVPGVHNARNAAAAISAAVLLGVSPADAAKAAGTFLGAARRFQVRGTVKQVTVVDDYAHHPTEIAALLDAARRRYPDSTIRVIFQPHLFSRTKFFAHQFAESLAKADDVIITGIFPAREKQADFPDISPSTIVDAAAGLKDASAGTWIQPVEDMCLAAKMMAMRAHHGDVIFTVGAGDITDMDQVLLTALEAHRESCE.

132–138 serves as a coordination point for ATP; sequence GAHGKTT.

It belongs to the MurCDEF family.

Its subcellular location is the cytoplasm. It catalyses the reaction UDP-N-acetyl-alpha-D-muramate + L-alanine + ATP = UDP-N-acetyl-alpha-D-muramoyl-L-alanine + ADP + phosphate + H(+). The protein operates within cell wall biogenesis; peptidoglycan biosynthesis. In terms of biological role, cell wall formation. This Bifidobacterium longum subsp. infantis (strain ATCC 15697 / DSM 20088 / JCM 1222 / NCTC 11817 / S12) protein is UDP-N-acetylmuramate--L-alanine ligase.